The chain runs to 104 residues: uncharacterized protein (104 aa).

A helical transmembrane segment spans residues 81-97 (CLLMLPCISVVMSISSV).

It localises to the cell membrane. This is an uncharacterized protein from Bacillus subtilis (strain 168).